The following is a 504-amino-acid chain: Maturase K (504 aa).

The protein belongs to the intron maturase 2 family. MatK subfamily.

The protein localises to the plastid. Its subcellular location is the chloroplast. Functionally, usually encoded in the trnK tRNA gene intron. Probably assists in splicing its own and other chloroplast group II introns. This Erythrina crista-galli (Cockspur coral tree) protein is Maturase K.